The following is a 1399-amino-acid chain: Meiosis-specific protein ASY2 (1399 aa).

One can recognise an HORMA domain in the interval Gln-10–Val-248. A compositionally biased stretch (acidic residues) spans Pro-257–Gln-266. 5 disordered regions span residues Pro-257–Gln-281, Ser-487–Pro-525, Arg-617–Glu-656, Pro-940–Val-974, and Asp-1045–Lys-1090. Residues Asp-267–Gln-281 are compositionally biased toward basic and acidic residues. The segment covering Ser-509–Ser-523 has biased composition (pro residues). The span at Arg-617–Ser-631 shows a compositional bias: polar residues. The stretch at Met-1205–Ala-1246 forms a coiled coil.

It is found in the chromosome. The protein resides in the nucleus. In terms of biological role, required for normal meiosis. The protein is Meiosis-specific protein ASY2 of Arabidopsis thaliana (Mouse-ear cress).